A 187-amino-acid polypeptide reads, in one-letter code: UPF0340 protein SP70585_0722 (187 aa).

Belongs to the UPF0340 family.

The polypeptide is UPF0340 protein SP70585_0722 (Streptococcus pneumoniae (strain 70585)).